A 757-amino-acid chain; its full sequence is Elongation factor G, mitochondrial (757 aa).

The tr-type G domain occupies 66 to 344 (DRMRNIGISA…VLDYLPCPME (279 aa)). Residues 75 to 82 (AHIDSGKT), 142 to 146 (DTPGH), and 196 to 199 (NKLD) contribute to the GTP site.

Belongs to the TRAFAC class translation factor GTPase superfamily. Classic translation factor GTPase family. EF-G/EF-2 subfamily.

It is found in the mitochondrion. It participates in protein biosynthesis; polypeptide chain elongation. Functionally, mitochondrial GTPase that catalyzes the GTP-dependent ribosomal translocation step during translation elongation. During this step, the ribosome changes from the pre-translocational (PRE) to the post-translocational (POST) state as the newly formed A-site-bound peptidyl-tRNA and P-site-bound deacylated tRNA move to the P and E sites, respectively. Catalyzes the coordinated movement of the two tRNA molecules, the mRNA and conformational changes in the ribosome. This chain is Elongation factor G, mitochondrial, found in Oryza sativa subsp. japonica (Rice).